A 322-amino-acid polypeptide reads, in one-letter code: Ribose-phosphate pyrophosphokinase (322 aa).

ATP-binding positions include 43–45 and 102–103; these read DGE and RQ. Mg(2+) is bound by residues His-137 and Asp-177. Lys-201 is a catalytic residue. Residues Arg-203, Asp-227, and 231–235 each bind D-ribose 5-phosphate; that span reads DTAGT.

Belongs to the ribose-phosphate pyrophosphokinase family. Class I subfamily. As to quaternary structure, homohexamer. The cofactor is Mg(2+).

It localises to the cytoplasm. The enzyme catalyses D-ribose 5-phosphate + ATP = 5-phospho-alpha-D-ribose 1-diphosphate + AMP + H(+). It functions in the pathway metabolic intermediate biosynthesis; 5-phospho-alpha-D-ribose 1-diphosphate biosynthesis; 5-phospho-alpha-D-ribose 1-diphosphate from D-ribose 5-phosphate (route I): step 1/1. In terms of biological role, involved in the biosynthesis of the central metabolite phospho-alpha-D-ribosyl-1-pyrophosphate (PRPP) via the transfer of pyrophosphoryl group from ATP to 1-hydroxyl of ribose-5-phosphate (Rib-5-P). This chain is Ribose-phosphate pyrophosphokinase, found in Xylella fastidiosa (strain Temecula1 / ATCC 700964).